The sequence spans 225 residues: PKHD-type hydroxylase YbiX (225 aa).

The Fe2OG dioxygenase domain maps to Thr78 to Ser177. 3 residues coordinate Fe cation: His96, Asp98, and His158. Arg168 lines the 2-oxoglutarate pocket.

The cofactor is Fe(2+). It depends on L-ascorbate as a cofactor.

The polypeptide is PKHD-type hydroxylase YbiX (Shigella boydii serotype 18 (strain CDC 3083-94 / BS512)).